A 154-amino-acid chain; its full sequence is Myoglobin (154 aa).

A Globin domain is found at 2–148 (GLSDGEWQLV…FRKDMASNYK (147 aa)). Ser-4 bears the Phosphoserine mark. His-65 contributes to the nitrite binding site. His-65 is a binding site for O2. Residue Thr-68 is modified to Phosphothreonine. A heme b-binding site is contributed by His-94.

It belongs to the globin family. In terms of assembly, monomeric.

Its subcellular location is the cytoplasm. The protein resides in the sarcoplasm. It carries out the reaction Fe(III)-heme b-[protein] + nitric oxide + H2O = Fe(II)-heme b-[protein] + nitrite + 2 H(+). It catalyses the reaction H2O2 + AH2 = A + 2 H2O. In terms of biological role, monomeric heme protein which primary function is to store oxygen and facilitate its diffusion within muscle tissues. Reversibly binds oxygen through a pentacoordinated heme iron and enables its timely and efficient release as needed during periods of heightened demand. Depending on the oxidative conditions of tissues and cells, and in addition to its ability to bind oxygen, it also has a nitrite reductase activity whereby it regulates the production of bioactive nitric oxide. Under stress conditions, like hypoxia and anoxia, it also protects cells against reactive oxygen species thanks to its pseudoperoxidase activity. In Hylobates agilis (Agile gibbon), this protein is Myoglobin (MB).